The sequence spans 960 residues: Collagenase ColA (960 aa).

The signal sequence occupies residues 1 to 30; the sequence is MNKNLRFTQMMIGISTMALSFGSIQTQVSA. The propeptide occupies 31 to 92; sequence EETAPYNILQ…KRDEIQLKQS (62 aa). The activator domain stretch occupies residues 93–365; that stretch reads YTLAELNKMP…AVEQMKTNYG (273 aa). Residues 93-764 form an S1 metalloprotease domain region; that stretch reads YTLAELNKMP…VFHGVATEEK (672 aa). Residues 375-644 form a catalytic subdomain region; the sequence is DLQKIREEGK…MQQLIDNQDK (270 aa). Position 500 (histidine 500) interacts with Zn(2+). The active site involves glutamate 501. Histidine 504 and glutamate 532 together coordinate Zn(2+). Residues 652 to 764 are helper subdomain; sequence NDYLIQHAPK…VFHGVATEEK (113 aa). The PKD domain occupies 768-849; the sequence is TTIVNMNGPY…ESKEQTKVTV (82 aa). The span at 836–845 shows a compositional bias: basic and acidic residues; it reads SRGKESKEQT. Residues 836–859 are disordered; sequence SRGKESKEQTKVTVKQDPQTSESY. Over residues 846-857 the composition is skewed to polar residues; the sequence is KVTVKQDPQTSE. Residues 852 to 960 are collagen-binding domain; it reads DPQTSESYEE…KNGEYSLLVK (109 aa).

This sequence belongs to the peptidase M9B family. Collagenase subfamily. The cofactor is Ca(2+). Zn(2+) is required as a cofactor.

Its subcellular location is the secreted. The catalysed reaction is Digestion of native collagen in the triple helical region at Xaa-|-Gly bonds. With synthetic peptides, a preference is shown for Gly at P3 and P1', Pro and Ala at P2 and P2', and hydroxyproline, Ala or Arg at P3'.. In terms of biological role, acts as a true collagenase, which is highly active and efficiently targets native tropocollagen. In vitro, can also cleave gelatin and the synthetic peptide FALGPA (furylacryloyl-Leu-Gly-Pro-Ala). May contribute to bacterial virulence in endophthalmitis or opportunistic infections via collagen degradation in the host extracellular matrix (ECM). The polypeptide is Collagenase ColA (Bacillus cereus (strain ATCC 14579 / DSM 31 / CCUG 7414 / JCM 2152 / NBRC 15305 / NCIMB 9373 / NCTC 2599 / NRRL B-3711)).